The sequence spans 486 residues: E3 ubiquitin-protein ligase TRIM58 (486 aa).

The segment at 16 to 61 (CPVCLDFLQEPVSVDCGHSFCLRCISEFCEKSDGAQGGVYACPQCR) adopts an RING-type zinc-finger fold. The segment at 91–132 (PGARRCARHGEDLSRFCEEDEAALCWVCDAGPEHRTHRTAPL) adopts a B box-type zinc-finger fold. Zn(2+)-binding residues include Cys-96, His-99, Cys-118, and His-124. A coiled-coil region spans residues 193 to 242 (LAQEEQRQLRRLEAEERATLQRLRESKSRLVQQSKALKELADELQERCQR). The B30.2/SPRY domain occupies 273 to 463 (LKTACCIPGR…TPLILPPTTI (191 aa)).

It belongs to the TRIM/RBCC family. In terms of tissue distribution, expressed in erythroblasts.

The enzyme catalyses S-ubiquitinyl-[E2 ubiquitin-conjugating enzyme]-L-cysteine + [acceptor protein]-L-lysine = [E2 ubiquitin-conjugating enzyme]-L-cysteine + N(6)-ubiquitinyl-[acceptor protein]-L-lysine.. The protein operates within protein modification; protein ubiquitination. Functionally, E3 ubiquitin ligase induced during late erythropoiesis. Directly binds and ubiquitinates the intermediate chain of the microtubule motor dynein (DYNC1LI1/DYNC1LI2), stimulating the degradation of the dynein holoprotein complex. May participate in the erythroblast enucleation process through regulation of nuclear polarization. The sequence is that of E3 ubiquitin-protein ligase TRIM58 (TRIM58) from Homo sapiens (Human).